Reading from the N-terminus, the 195-residue chain is Pyridoxal 5'-phosphate synthase subunit PdxT (195 aa).

G46–S48 serves as a coordination point for L-glutamine. The Nucleophile role is filled by C78. Residues R106 and I134–R135 each bind L-glutamine. Active-site charge relay system residues include H170 and E172.

This sequence belongs to the glutaminase PdxT/SNO family. In the presence of PdxS, forms a dodecamer of heterodimers. Only shows activity in the heterodimer.

It catalyses the reaction aldehydo-D-ribose 5-phosphate + D-glyceraldehyde 3-phosphate + L-glutamine = pyridoxal 5'-phosphate + L-glutamate + phosphate + 3 H2O + H(+). The enzyme catalyses L-glutamine + H2O = L-glutamate + NH4(+). The protein operates within cofactor biosynthesis; pyridoxal 5'-phosphate biosynthesis. Functionally, catalyzes the hydrolysis of glutamine to glutamate and ammonia as part of the biosynthesis of pyridoxal 5'-phosphate. The resulting ammonia molecule is channeled to the active site of PdxS. In Pseudothermotoga lettingae (strain ATCC BAA-301 / DSM 14385 / NBRC 107922 / TMO) (Thermotoga lettingae), this protein is Pyridoxal 5'-phosphate synthase subunit PdxT.